The primary structure comprises 114 residues: Probable 4-amino-4-deoxy-L-arabinose-phosphoundecaprenol flippase subunit ArnE (114 aa).

An EamA domain is found at 39-112; the sequence is RSPWLWLALF…VIGGVALLGQ (74 aa). Helical transmembrane passes span 41–61, 64–84, and 91–111; these read PWLW…LLVL, LPVS…TLIA, and PVDV…ALLG.

This sequence belongs to the ArnE family. As to quaternary structure, heterodimer of ArnE and ArnF.

The protein resides in the cell inner membrane. It functions in the pathway bacterial outer membrane biogenesis; lipopolysaccharide biosynthesis. Translocates 4-amino-4-deoxy-L-arabinose-phosphoundecaprenol (alpha-L-Ara4N-phosphoundecaprenol) from the cytoplasmic to the periplasmic side of the inner membrane. This chain is Probable 4-amino-4-deoxy-L-arabinose-phosphoundecaprenol flippase subunit ArnE, found in Pseudomonas fluorescens (strain Pf0-1).